A 63-amino-acid chain; its full sequence is Synergistic-type venom protein C9S3, chain 2 (63 aa).

3 disulfide bridges follow: Cys3-Cys24, Cys17-Cys42, and Cys46-Cys57.

The protein belongs to the three-finger toxin family. Short-chain subfamily. Aminergic toxin sub-subfamily. In terms of assembly, heterodimer of C9S3 chain 1 (AC P01408) and chain 2, linked by at least two disulfide bonds. In terms of tissue distribution, expressed by the venom gland.

It is found in the secreted. Functionally, this protein shows a synergetic toxic effect in that it enhances the toxicity of other D.angusticeps toxins. This is Synergistic-type venom protein C9S3, chain 2 from Dendroaspis angusticeps (Eastern green mamba).